Here is a 558-residue protein sequence, read N- to C-terminus: Undecaprenyl phosphate-alpha-4-amino-4-deoxy-L-arabinose arabinosyl transferase 1 (558 aa).

Helical transmembrane passes span 4–24 (GAGLWLGLLAVFFVLTYLVPL), 87–107 (FASVFSTGLSALLVFTVSWTV), 115–135 (LLAALIFLSLLLVFGVGTYSV), 136–156 (LDPMIALWLNAAMAAHVFALR), 178–198 (FMTKGFLALVVPAIAVLPVAL), 207–227 (LGYGALAALLAVLVNLPWALA), 257–277 (APFWFYLPVLALGSLPWLGLL), 295–315 (FLLLCWVVMPLLFFSVAKGKL), 316–336 (LTYILPCMAPLALLLAAYGRE), 355–375 (AFALCAIVALLLAGSGLLPWA), 383–403 (WPRIVIGTLVFAGWLCFAAVS), and 411–431 (WALAAFCPLLLSLLVGQIIPQ).

Belongs to the glycosyltransferase 83 family.

The protein resides in the cell inner membrane. It carries out the reaction 4-amino-4-deoxy-alpha-L-arabinopyranosyl di-trans,octa-cis-undecaprenyl phosphate + lipid IVA = lipid IIA + di-trans,octa-cis-undecaprenyl phosphate.. It functions in the pathway lipopolysaccharide metabolism; 4-amino-4-deoxy-beta-L-arabinose-lipid A biosynthesis. Functionally, catalyzes the transfer of the L-Ara4N moiety of the glycolipid undecaprenyl phosphate-alpha-L-Ara4N to lipid A. The modified arabinose is attached to lipid A and is required for resistance to polymyxin and cationic antimicrobial peptides. This chain is Undecaprenyl phosphate-alpha-4-amino-4-deoxy-L-arabinose arabinosyl transferase 1, found in Sodalis glossinidius (strain morsitans).